The sequence spans 70 residues: MLRLAPTVRLLQAPLRGWAVPKAHITAKPAKTPTSPKEQAIGLSVTFLSFLLPAGWVLYHLDNYKKSSAA.

Residues 1–24 (MLRLAPTVRLLQAPLRGWAVPKAH) constitute a mitochondrion transit peptide. Residues 25 to 35 (ITAKPAKTPTS) are Mitochondrial matrix-facing. Residues 36 to 59 (PKEQAIGLSVTFLSFLLPAGWVLY) traverse the membrane as a helical segment. The Mitochondrial intermembrane portion of the chain corresponds to 60-70 (HLDNYKKSSAA).

Belongs to the cytochrome c oxidase VIII family. Component of the cytochrome c oxidase (complex IV, CIV), a multisubunit enzyme composed of 14 subunits. The complex is composed of a catalytic core of 3 subunits MT-CO1, MT-CO2 and MT-CO3, encoded in the mitochondrial DNA, and 11 supernumerary subunits COX4I1 (or COX4I2), COX5A, COX5B, COX6A2 (or COX6A1), COX6B1 (or COX6B2), COX6C, COX7A1 (or COX7A2), COX7B, COX7C, COX8B and NDUFA4, which are encoded in the nuclear genome. The complex exists as a monomer or a dimer and forms supercomplexes (SCs) in the inner mitochondrial membrane with NADH-ubiquinone oxidoreductase (complex I, CI) and ubiquinol-cytochrome c oxidoreductase (cytochrome b-c1 complex, complex III, CIII), resulting in different assemblies (supercomplex SCI(1)III(2)IV(1) and megacomplex MCI(2)III(2)IV(2)).

It localises to the mitochondrion inner membrane. It functions in the pathway energy metabolism; oxidative phosphorylation. Functionally, component of the cytochrome c oxidase, the last enzyme in the mitochondrial electron transport chain which drives oxidative phosphorylation. The respiratory chain contains 3 multisubunit complexes succinate dehydrogenase (complex II, CII), ubiquinol-cytochrome c oxidoreductase (cytochrome b-c1 complex, complex III, CIII) and cytochrome c oxidase (complex IV, CIV), that cooperate to transfer electrons derived from NADH and succinate to molecular oxygen, creating an electrochemical gradient over the inner membrane that drives transmembrane transport and the ATP synthase. Cytochrome c oxidase is the component of the respiratory chain that catalyzes the reduction of oxygen to water. Electrons originating from reduced cytochrome c in the intermembrane space (IMS) are transferred via the dinuclear copper A center (CU(A)) of subunit 2 and heme A of subunit 1 to the active site in subunit 1, a binuclear center (BNC) formed by heme A3 and copper B (CU(B)). The BNC reduces molecular oxygen to 2 water molecules using 4 electrons from cytochrome c in the IMS and 4 protons from the mitochondrial matrix. The polypeptide is Cytochrome c oxidase subunit 8B, mitochondrial (COX8B) (Bos taurus (Bovine)).